The primary structure comprises 350 residues: Transmembrane protein 185B (350 aa).

The next 7 membrane-spanning stretches (helical) occupy residues 16-36 (LIYA…DGII), 41-61 (WAVF…ASVG), 81-101 (FKAM…EILV), 111-131 (FWLL…AACV), 168-188 (WLVV…VVLY), 211-231 (VTMA…EVLL), and 240-260 (TFSY…LMAT).

It belongs to the TMEM185 family.

It localises to the membrane. This Mus musculus (Mouse) protein is Transmembrane protein 185B (Tmem185b).